A 271-amino-acid polypeptide reads, in one-letter code: Indole-3-glycerol phosphate synthase (271 aa).

Belongs to the TrpC family.

It catalyses the reaction 1-(2-carboxyphenylamino)-1-deoxy-D-ribulose 5-phosphate + H(+) = (1S,2R)-1-C-(indol-3-yl)glycerol 3-phosphate + CO2 + H2O. It functions in the pathway amino-acid biosynthesis; L-tryptophan biosynthesis; L-tryptophan from chorismate: step 4/5. The chain is Indole-3-glycerol phosphate synthase from Haloarcula marismortui (strain ATCC 43049 / DSM 3752 / JCM 8966 / VKM B-1809) (Halobacterium marismortui).